The primary structure comprises 404 residues: Cysteine desulfurase IscS (404 aa).

Pyridoxal 5'-phosphate-binding positions include 73–74, N153, Q181, and 201–203; these read AT and SAH. N6-(pyridoxal phosphate)lysine is present on K204. A pyridoxal 5'-phosphate-binding site is contributed by T241. C327 (cysteine persulfide intermediate) is an active-site residue. A [2Fe-2S] cluster-binding site is contributed by C327.

The protein belongs to the class-V pyridoxal-phosphate-dependent aminotransferase family. NifS/IscS subfamily. In terms of assembly, homodimer. Forms a heterotetramer with IscU, interacts with other sulfur acceptors. Pyridoxal 5'-phosphate serves as cofactor.

It localises to the cytoplasm. The enzyme catalyses (sulfur carrier)-H + L-cysteine = (sulfur carrier)-SH + L-alanine. Its pathway is cofactor biosynthesis; iron-sulfur cluster biosynthesis. In terms of biological role, master enzyme that delivers sulfur to a number of partners involved in Fe-S cluster assembly, tRNA modification or cofactor biosynthesis. Catalyzes the removal of elemental sulfur atoms from cysteine to produce alanine. Functions as a sulfur delivery protein for Fe-S cluster synthesis onto IscU, an Fe-S scaffold assembly protein, as well as other S acceptor proteins. The sequence is that of Cysteine desulfurase IscS from Anaeromyxobacter sp. (strain K).